Consider the following 180-residue polypeptide: Mitochondrial inner membrane protease subunit 2 (180 aa).

Residues 19–39 traverse the membrane as a helical segment; the sequence is LVGITLWVPVLMFVEQHVVSV. Residues Ser46 and Lys92 contribute to the active site.

Belongs to the peptidase S26 family. IMP2 subfamily. As to quaternary structure, heterodimer of 2 subunits, imp1 and imp2.

It localises to the mitochondrion inner membrane. Its function is as follows. Catalyzes the removal of transit peptides required for the targeting of proteins from the mitochondrial matrix, across the inner membrane, into the inter-membrane space. This Schizosaccharomyces pombe (strain 972 / ATCC 24843) (Fission yeast) protein is Mitochondrial inner membrane protease subunit 2.